Consider the following 340-residue polypeptide: Aldose 1-epimerase (340 aa).

Arg-77 is a substrate binding site. Catalysis depends on His-172, which acts as the Proton donor. Asp-243 is a substrate binding site. The Proton acceptor role is filled by Glu-305.

Belongs to the aldose epimerase family.

The protein resides in the cytoplasm. The enzyme catalyses alpha-D-glucose = beta-D-glucose. It functions in the pathway carbohydrate metabolism; hexose metabolism. In terms of biological role, mutarotase converts alpha-aldose to the beta-anomer. It is active on D-glucose, L-arabinose, D-xylose, D-galactose, maltose and lactose. This is Aldose 1-epimerase (galM) from Haemophilus influenzae (strain ATCC 51907 / DSM 11121 / KW20 / Rd).